Consider the following 387-residue polypeptide: L-aspartate:5-guanidino-3-methyl-2-oxopentanoate transaminase (387 aa).

Lys-237 carries the N6-(pyridoxal phosphate)lysine modification.

The protein belongs to the class-I pyridoxal-phosphate-dependent aminotransferase family. Requires pyridoxal 5'-phosphate as cofactor.

It catalyses the reaction (3R)-5-guanidino-3-methyl-2-oxopentanoate + L-aspartate = (3R)-3-methyl-L-arginine + oxaloacetate. It participates in antibiotic biosynthesis. Its function is as follows. Aminotransferase involved in the formation of the rare amino acid 3-methylarginine (MeArg), which is used as a potent antibiotic against the closely related soybean pathogen P.syringae pv. glycinea. Probably catalyzes transamination from the donor L-aspartate to 5-guanidino-3-methyl-2-oxopentanoic acid, generating 3-methylarginine. The protein is L-aspartate:5-guanidino-3-methyl-2-oxopentanoate transaminase of Pseudomonas syringae pv. syringae.